The primary structure comprises 147 residues: Hemoglobin subunit beta-1/2 (147 aa).

N-acetylvaline is present on Val-2. The region spanning 3-147 (HLSSEEKSAV…VANALAHKYH (145 aa)) is the Globin domain. A Phosphothreonine modification is found at Thr-13. Ser-45 is modified (phosphoserine). Lys-60 is modified (N6-acetyllysine). His-64 is a heme b binding site. Lys-83 is modified (N6-acetyllysine). His-93 contacts heme b. Cys-94 is modified (S-nitrosocysteine). The residue at position 145 (Lys-145) is an N6-acetyllysine.

Belongs to the globin family. As to quaternary structure, heterotetramer of two alpha chains and two beta chains. Red blood cells.

Involved in oxygen transport from the lung to the various peripheral tissues. The sequence is that of Hemoglobin subunit beta-1/2 (HBB1) from Oryctolagus cuniculus (Rabbit).